A 464-amino-acid polypeptide reads, in one-letter code: FERM domain-containing protein 8 (464 aa).

An N-acetylmethionine modification is found at Met-1. The disordered stretch occupies residues 1-22 (MDGTEGSAGQPGPAERSHRSSV). At Ser-24 the chain carries Phosphoserine. The FERM domain occupies 30-376 (ADVLVYLADD…YCIELSQAAE (347 aa)). Residues 376-408 (EPAGPQDSATGSPSDPSSSLAPVQRPKLRRQGS) are disordered. Ser-383, Ser-387, and Ser-408 each carry phosphoserine. The residue at position 419 (Thr-419) is a Phosphothreonine. Phosphoserine occurs at positions 439 and 446.

Interacts with iRhom1/RHBDF1 and iRhom2/RHBDF2 (via cytoplasmic N-termini); this interaction leads to mutual protein stabilization. Interacts with ADAM17; this interaction is indirect and mediated by iRhom proteins. Interacts with LRP6; this interaction affects LRP6-binding to AXIN1. Widely expressed, with high expression in heart and spleen.

It is found in the cytoplasm. The protein resides in the cytosol. The protein localises to the cell membrane. Its function is as follows. Promotes the cell surface stability of iRhom1/RHBDF1 and iRhom2/RHBDF2 and prevents their degradation via the endolysosomal pathway. By acting on iRhoms, involved in ADAM17-mediated shedding of TNF, amphiregulin/AREG, HBEGF and TGFA from the cell surface. Negatively regulates Wnt signaling, possibly by antagonizing the recruitment of AXIN1 to LRP6. This Homo sapiens (Human) protein is FERM domain-containing protein 8 (FRMD8).